Here is a 246-residue protein sequence, read N- to C-terminus: Acetylglutamate kinase (246 aa).

Substrate-binding positions include 30-31, Arg52, and Asn151; that span reads GG.

It belongs to the acetylglutamate kinase family. ArgB subfamily.

Its subcellular location is the cytoplasm. The enzyme catalyses N-acetyl-L-glutamate + ATP = N-acetyl-L-glutamyl 5-phosphate + ADP. It functions in the pathway amino-acid biosynthesis; L-arginine biosynthesis; N(2)-acetyl-L-ornithine from L-glutamate: step 2/4. Functionally, catalyzes the ATP-dependent phosphorylation of N-acetyl-L-glutamate. The protein is Acetylglutamate kinase of Methanopyrus kandleri (strain AV19 / DSM 6324 / JCM 9639 / NBRC 100938).